A 270-amino-acid chain; its full sequence is Putative phosphoenolpyruvate synthase regulatory protein (270 aa).

149–156 (GVSRSGKT) contributes to the ADP binding site.

This sequence belongs to the pyruvate, phosphate/water dikinase regulatory protein family. PSRP subfamily.

The catalysed reaction is [pyruvate, water dikinase] + ADP = [pyruvate, water dikinase]-phosphate + AMP + H(+). The enzyme catalyses [pyruvate, water dikinase]-phosphate + phosphate + H(+) = [pyruvate, water dikinase] + diphosphate. Bifunctional serine/threonine kinase and phosphorylase involved in the regulation of the phosphoenolpyruvate synthase (PEPS) by catalyzing its phosphorylation/dephosphorylation. This Pseudoalteromonas atlantica (strain T6c / ATCC BAA-1087) protein is Putative phosphoenolpyruvate synthase regulatory protein.